We begin with the raw amino-acid sequence, 177 residues long: Large ribosomal subunit protein uL10 (177 aa).

This sequence belongs to the universal ribosomal protein uL10 family. In terms of assembly, part of the ribosomal stalk of the 50S ribosomal subunit. The N-terminus interacts with L11 and the large rRNA to form the base of the stalk. The C-terminus forms an elongated spine to which L12 dimers bind in a sequential fashion forming a multimeric L10(L12)X complex.

Functionally, forms part of the ribosomal stalk, playing a central role in the interaction of the ribosome with GTP-bound translation factors. The chain is Large ribosomal subunit protein uL10 from Legionella pneumophila (strain Paris).